The following is a 169-amino-acid chain: Phosphopantetheine adenylyltransferase (169 aa).

Substrate is bound at residue Ser-10. ATP-binding positions include 10–11 (SF) and His-18. The substrate site is built by Lys-42, Thr-79, and Arg-93. ATP is bound by residues 94–96 (GLR), Glu-104, and 129–135 (VRPITAT).

It belongs to the bacterial CoaD family. Homohexamer. It depends on Mg(2+) as a cofactor.

It localises to the cytoplasm. It carries out the reaction (R)-4'-phosphopantetheine + ATP + H(+) = 3'-dephospho-CoA + diphosphate. Its pathway is cofactor biosynthesis; coenzyme A biosynthesis; CoA from (R)-pantothenate: step 4/5. In terms of biological role, reversibly transfers an adenylyl group from ATP to 4'-phosphopantetheine, yielding dephospho-CoA (dPCoA) and pyrophosphate. In Rhodopseudomonas palustris (strain ATCC BAA-98 / CGA009), this protein is Phosphopantetheine adenylyltransferase.